We begin with the raw amino-acid sequence, 122 residues long: Large ribosomal subunit protein bL12 (122 aa).

Belongs to the bacterial ribosomal protein bL12 family. In terms of assembly, homodimer. Part of the ribosomal stalk of the 50S ribosomal subunit. Forms a multimeric L10(L12)X complex, where L10 forms an elongated spine to which 2 to 4 L12 dimers bind in a sequential fashion. Binds GTP-bound translation factors.

Its function is as follows. Forms part of the ribosomal stalk which helps the ribosome interact with GTP-bound translation factors. Is thus essential for accurate translation. The sequence is that of Large ribosomal subunit protein bL12 from Histophilus somni (strain 129Pt) (Haemophilus somnus).